The following is a 1097-amino-acid chain: DNA-directed RNA polymerase subunit beta (1097 aa).

The disordered stretch occupies residues 1073 to 1097 (DVNPRRSTPSRPTYESLGVADYDED).

It belongs to the RNA polymerase beta chain family. As to quaternary structure, in cyanobacteria the RNAP catalytic core is composed of 2 alpha, 1 beta, 1 beta', 1 gamma and 1 omega subunit. When a sigma factor is associated with the core the holoenzyme is formed, which can initiate transcription.

It carries out the reaction RNA(n) + a ribonucleoside 5'-triphosphate = RNA(n+1) + diphosphate. DNA-dependent RNA polymerase catalyzes the transcription of DNA into RNA using the four ribonucleoside triphosphates as substrates. The polypeptide is DNA-directed RNA polymerase subunit beta (Synechococcus sp. (strain CC9311)).